The chain runs to 468 residues: ERO1-like protein alpha (468 aa).

The first 23 residues, 1 to 23 (MGRRWGFLIGFLVAVGLLGLGHG), serve as a signal peptide directing secretion. 8 disulfides stabilise this stretch: cysteine 35-cysteine 48, cysteine 37-cysteine 46, cysteine 85-cysteine 391, cysteine 94-cysteine 99, cysteine 94-cysteine 131, cysteine 99-cysteine 104, cysteine 208-cysteine 241, and cysteine 394-cysteine 397. Residues serine 106, serine 143, and serine 145 each carry the phosphoserine modification. The FAD site is built by arginine 187, threonine 189, and tryptophan 200. FAD contacts are provided by serine 252 and histidine 255. An N-linked (GlcNAc...) asparagine glycan is attached at asparagine 280. Arginine 287 and arginine 300 together coordinate FAD. Asparagine 384 carries N-linked (GlcNAc...) asparagine glycosylation.

The protein belongs to the EROs family. Predominantly monomer. May function both as a monomer and a homodimer. Interacts with PDILT. Interacts with ERP44; the interaction results in retention of ERO1A in the endoplasmic reticulum. FAD is required as a cofactor. The Cys-94/Cys-99 and Cys-394/Cys-397 disulfide bonds constitute the redox-active center. The Cys-94/Cys-99 disulfide bond may accept electron from P4HB and funnel them to the active site disulfide Cys-394/Cys-397. The regulatory Cys-99/Cys-104 disulfide bond stabilizes the other regulatory bond Cys-94/Cys-131. In terms of processing, phosphorylated on Ser-145 by FAM20C in the Golgi which increases its enzymatic activity. Phosphorylation is induced by lactation. It is also induced by hypoxia and reductive stress.

Its subcellular location is the endoplasmic reticulum membrane. It localises to the golgi apparatus lumen. It is found in the secreted. The protein localises to the cell projection. The protein resides in the dendrite. Enzyme activity is tightly regulated to prevent the accumulation of reactive oxygen species in the endoplasmic reticulum. Reversibly down-regulated by the formation of disulfide bonds between the active site Cys-94 and Cys-131, and between Cys-99 and Cys-104. Glutathione may be required to regulate its activity in the endoplasmic reticulum. Its function is as follows. Oxidoreductase involved in disulfide bond formation in the endoplasmic reticulum. Efficiently reoxidizes P4HB/PDI, the enzyme catalyzing protein disulfide formation, in order to allow P4HB to sustain additional rounds of disulfide formation. Following P4HB reoxidation, passes its electrons to molecular oxygen via FAD, leading to the production of reactive oxygen species (ROS) in the cell. Required for the proper folding of immunoglobulins. Plays an important role in ER stress-induced, CHOP-dependent apoptosis by activating the inositol 1,4,5-trisphosphate receptor IP3R1. This chain is ERO1-like protein alpha, found in Bos taurus (Bovine).